The primary structure comprises 121 residues: Small ribosomal subunit protein uS13 (121 aa).

Positions 97-121 (VRGQRTRTNARTRRGARKTVAGKKK) are disordered. Over residues 100–121 (QRTRTNARTRRGARKTVAGKKK) the composition is skewed to basic residues.

It belongs to the universal ribosomal protein uS13 family. Part of the 30S ribosomal subunit. Forms a loose heterodimer with protein S19. Forms two bridges to the 50S subunit in the 70S ribosome.

Functionally, located at the top of the head of the 30S subunit, it contacts several helices of the 16S rRNA. In the 70S ribosome it contacts the 23S rRNA (bridge B1a) and protein L5 of the 50S subunit (bridge B1b), connecting the 2 subunits; these bridges are implicated in subunit movement. Contacts the tRNAs in the A and P-sites. This is Small ribosomal subunit protein uS13 from Synechococcus sp. (strain CC9902).